A 103-amino-acid polypeptide reads, in one-letter code: Histone H4 (103 aa).

Residues 1 to 14 are compositionally biased toward gly residues; it reads MSGRGKGGKGLGKG. Residues 1–20 are disordered; it reads MSGRGKGGKGLGKGGAKRHR. S2 carries the post-translational modification N-acetylserine. 2 positions are modified to N6-acetyl-N6-methyllysine; alternate: K6 and K13. At K17 the chain carries N6-acetyllysine. A DNA-binding region spans residues 17–21; sequence KRHRR.

It belongs to the histone H4 family. The nucleosome is a histone octamer containing two molecules each of H2A, H2B, H3 and H4 assembled in one H3-H4 heterotetramer and two H2A-H2B heterodimers. The octamer wraps approximately 147 bp of DNA.

The protein localises to the nucleus. It is found in the chromosome. Its function is as follows. Core component of nucleosome. Nucleosomes wrap and compact DNA into chromatin, limiting DNA accessibility to the cellular machineries which require DNA as a template. Histones thereby play a central role in transcription regulation, DNA repair, DNA replication and chromosomal stability. DNA accessibility is regulated via a complex set of post-translational modifications of histones, also called histone code, and nucleosome remodeling. The protein is Histone H4 of Mytilus chilensis (Chilean blue mussel).